The sequence spans 1207 residues: Stress response protein NST1 (1207 aa).

7 disordered regions span residues 1–58 (MGLD…EETH), 248–284 (HNKQRQYSEQQRKQQLPPVHTHNSPSDSPSIDELPER), 398–420 (LDMSQSPVPTNDDPPQDCTDTDE), 451–535 (SNKN…DYDS), 586–735 (EQQK…DNLH), 1124–1148 (APAAAPGGSDLPPRQPSKGLFSDPV), and 1163–1183 (TSTGSTSSATPTGSIALGQPS). A compositionally biased stretch (polar residues) spans 7 to 16 (TVVTGQNVQF). The segment covering 25 to 36 (KKSRNKKKKSKP) has biased composition (basic residues). Low complexity predominate over residues 252-262 (RQYSEQQRKQQ). Residues 469-507 (EDSEYDEDLNYSDSYDDEDSPYDDDVYDDNDAESYDEDD) are compositionally biased toward acidic residues. The span at 511-523 (HKHHHQQHLHHHH) shows a compositional bias: basic residues. The stretch at 564-727 (VSYQEKQAER…REEDDKPTEE (164 aa)) forms a coiled coil. A compositionally biased stretch (basic and acidic residues) spans 586–721 (EQQKKEKEEK…LEVKKKREED (136 aa)). The span at 1163-1176 (TSTGSTSSATPTGS) shows a compositional bias: low complexity.

The protein belongs to the NST1 family.

It localises to the cytoplasm. In terms of biological role, may act as a negative regulator of salt tolerance. The protein is Stress response protein NST1 (NST1) of Eremothecium gossypii (strain ATCC 10895 / CBS 109.51 / FGSC 9923 / NRRL Y-1056) (Yeast).